Consider the following 650-residue polypeptide: Acetyl-coenzyme A synthetase (650 aa).

CoA-binding positions include 191 to 194 (RAGR), Thr311, and Asn335. ATP contacts are provided by residues 387–389 (GEP), 411–416 (DTWWQT), Asp500, and Arg515. Ser523 contributes to the CoA binding site. Arg526 lines the ATP pocket. Residues Val537, His539, and Val542 each contribute to the Mg(2+) site. Arg584 lines the CoA pocket. Lys609 bears the N6-acetyllysine mark.

It belongs to the ATP-dependent AMP-binding enzyme family. Mg(2+) serves as cofactor. Acetylated. Deacetylation by the SIR2-homolog deacetylase activates the enzyme.

It carries out the reaction acetate + ATP + CoA = acetyl-CoA + AMP + diphosphate. In terms of biological role, catalyzes the conversion of acetate into acetyl-CoA (AcCoA), an essential intermediate at the junction of anabolic and catabolic pathways. AcsA undergoes a two-step reaction. In the first half reaction, AcsA combines acetate with ATP to form acetyl-adenylate (AcAMP) intermediate. In the second half reaction, it can then transfer the acetyl group from AcAMP to the sulfhydryl group of CoA, forming the product AcCoA. This is Acetyl-coenzyme A synthetase from Shewanella pealeana (strain ATCC 700345 / ANG-SQ1).